We begin with the raw amino-acid sequence, 590 residues long: Aspartate--tRNA(Asp/Asn) ligase (590 aa).

E182 is an L-aspartate binding site. An aspartate region spans residues 206-209 (QLFK). R228 serves as a coordination point for L-aspartate. Residues 228-230 (RDE) and Q237 each bind ATP. H454 is an L-aspartate binding site. Position 488 (E488) interacts with ATP. L-aspartate is bound at residue R495. Position 540 to 543 (540 to 543 (GLDR)) interacts with ATP.

This sequence belongs to the class-II aminoacyl-tRNA synthetase family. Type 1 subfamily. As to quaternary structure, homodimer.

It is found in the cytoplasm. It carries out the reaction tRNA(Asx) + L-aspartate + ATP = L-aspartyl-tRNA(Asx) + AMP + diphosphate. Aspartyl-tRNA synthetase with relaxed tRNA specificity since it is able to aspartylate not only its cognate tRNA(Asp) but also tRNA(Asn). Reaction proceeds in two steps: L-aspartate is first activated by ATP to form Asp-AMP and then transferred to the acceptor end of tRNA(Asp/Asn). This Halothermothrix orenii (strain H 168 / OCM 544 / DSM 9562) protein is Aspartate--tRNA(Asp/Asn) ligase.